The primary structure comprises 161 residues: Phosphopantetheine adenylyltransferase (161 aa).

Ser-8 is a substrate binding site. ATP is bound by residues 8–9 (SF) and His-16. Lys-40, Thr-72, and Arg-86 together coordinate substrate. ATP contacts are provided by residues 87 to 89 (GLR), Glu-97, and 122 to 128 (HSFLSSS).

It belongs to the bacterial CoaD family. In terms of assembly, homohexamer. The cofactor is Mg(2+).

It localises to the cytoplasm. It catalyses the reaction (R)-4'-phosphopantetheine + ATP + H(+) = 3'-dephospho-CoA + diphosphate. It functions in the pathway cofactor biosynthesis; coenzyme A biosynthesis; CoA from (R)-pantothenate: step 4/5. Functionally, reversibly transfers an adenylyl group from ATP to 4'-phosphopantetheine, yielding dephospho-CoA (dPCoA) and pyrophosphate. In Prochlorococcus marinus (strain SARG / CCMP1375 / SS120), this protein is Phosphopantetheine adenylyltransferase.